Consider the following 100-residue polypeptide: uncharacterized protein (100 aa).

This is an uncharacterized protein from Bacillus subtilis (strain 168).